The primary structure comprises 900 residues: Alanine--tRNA ligase (900 aa).

H604, H608, C708, and H712 together coordinate Zn(2+).

The protein belongs to the class-II aminoacyl-tRNA synthetase family. Zn(2+) is required as a cofactor.

The protein resides in the cytoplasm. The enzyme catalyses tRNA(Ala) + L-alanine + ATP = L-alanyl-tRNA(Ala) + AMP + diphosphate. Catalyzes the attachment of alanine to tRNA(Ala) in a two-step reaction: alanine is first activated by ATP to form Ala-AMP and then transferred to the acceptor end of tRNA(Ala). Also edits incorrectly charged Ser-tRNA(Ala) and Gly-tRNA(Ala) via its editing domain. This chain is Alanine--tRNA ligase, found in Saccharolobus islandicus (strain Y.G.57.14 / Yellowstone #1) (Sulfolobus islandicus).